Reading from the N-terminus, the 351-residue chain is Secreted frizzled-related sequence protein 4 (351 aa).

Positions 1–18 (MLRSILVALCLWLRLALG) are cleaved as a signal peptide. One can recognise an FZ domain in the interval 19 to 139 (VRGAPCEAVR…VYDRGVCISP (121 aa)). Cystine bridges form between Cys-24-Cys-85, Cys-32-Cys-78, Cys-69-Cys-108, Cys-97-Cys-136, and Cys-101-Cys-125. N-linked (GlcNAc...) asparagine glycosylation is found at Asn-38 and Asn-68. Residues Asn-116, Asn-194, and Asn-240 are each glycosylated (N-linked (GlcNAc...) asparagine). The NTR domain maps to 178 to 306 (CKCKKVKPTL…TIQDKKQIAS (129 aa)). Residues 293–303 (EQQRTIQDKKQ) are compositionally biased toward basic and acidic residues. Residues 293–351 (EQQRTIQDKKQIASRTSRTSRSNPPKSKGRPPAPKPASPKKNIKARSAPKKSNLKKSAS) are disordered. A compositionally biased stretch (low complexity) spans 306–318 (SRTSRTSRSNPPK). Residues 333–351 (KNIKARSAPKKSNLKKSAS) are compositionally biased toward basic residues.

This sequence belongs to the secreted frizzled-related protein (sFRP) family. Expressed in the ovary. Localized to granulosa cells of periovulatory follicles and corpora lutea. Weakly expressed in adult tissues including kidney, brain and lung.

Its subcellular location is the secreted. Its function is as follows. Soluble frizzled-related proteins (sFRPS) function as modulators of Wnt signaling through direct interaction with Wnts. They have a role in regulating cell growth and differentiation in specific cell types. SFRP4 plays a role in bone morphogenesis. May also act as a regulator of adult uterine morphology and function. May also increase apoptosis during ovulation possibly through modulation of FZ1/FZ4/WNT4 signaling. Has phosphaturic effects by specifically inhibiting sodium-dependent phosphate uptake. The protein is Secreted frizzled-related sequence protein 4 (Sfrp4) of Mus musculus (Mouse).